A 126-amino-acid chain; its full sequence is Aspartate 1-decarboxylase (126 aa).

Residue Ser-25 is the Schiff-base intermediate with substrate; via pyruvic acid of the active site. Ser-25 is modified (pyruvic acid (Ser)). Thr-57 lines the substrate pocket. The Proton donor role is filled by Tyr-58. 73-75 contacts substrate; the sequence is GGA.

This sequence belongs to the PanD family. As to quaternary structure, heterooctamer of four alpha and four beta subunits. The cofactor is pyruvate. In terms of processing, is synthesized initially as an inactive proenzyme, which is activated by self-cleavage at a specific serine bond to produce a beta-subunit with a hydroxyl group at its C-terminus and an alpha-subunit with a pyruvoyl group at its N-terminus.

It is found in the cytoplasm. It carries out the reaction L-aspartate + H(+) = beta-alanine + CO2. It participates in cofactor biosynthesis; (R)-pantothenate biosynthesis; beta-alanine from L-aspartate: step 1/1. Catalyzes the pyruvoyl-dependent decarboxylation of aspartate to produce beta-alanine. The protein is Aspartate 1-decarboxylase of Stenotrophomonas maltophilia (strain R551-3).